The primary structure comprises 580 residues: Isocitrate lyase (580 aa).

106 to 108 lines the substrate pocket; that stretch reads SGW. Residue Asp177 coordinates Mg(2+). Cys215 serves as the catalytic Proton acceptor. Substrate-binding positions include 216 to 217, Arg252, 441 to 445, and Thr476; these read GH and NLSPS. The short motif at 578 to 580 is the Microbody targeting signal element; that stretch reads SRM.

It belongs to the isocitrate lyase/PEP mutase superfamily. Isocitrate lyase family. In terms of assembly, homotetramer. Requires Mg(2+) as cofactor.

The protein resides in the glyoxysome. It catalyses the reaction D-threo-isocitrate = glyoxylate + succinate. It functions in the pathway carbohydrate metabolism; glyoxylate cycle; (S)-malate from isocitrate: step 1/2. Involved in storage lipid mobilization during the growth of higher plant seedling. This chain is Isocitrate lyase (ICL 8), found in Pinus taeda (Loblolly pine).